A 199-amino-acid polypeptide reads, in one-letter code: N-(5'-phosphoribosyl)anthranilate isomerase (199 aa).

It belongs to the TrpF family.

The enzyme catalyses N-(5-phospho-beta-D-ribosyl)anthranilate = 1-(2-carboxyphenylamino)-1-deoxy-D-ribulose 5-phosphate. It participates in amino-acid biosynthesis; L-tryptophan biosynthesis; L-tryptophan from chorismate: step 3/5. The polypeptide is N-(5'-phosphoribosyl)anthranilate isomerase (Campylobacter jejuni subsp. jejuni serotype O:6 (strain 81116 / NCTC 11828)).